The following is a 448-amino-acid chain: tRNA modification GTPase MnmE (448 aa).

Positions 24, 81, and 120 each coordinate (6S)-5-formyl-5,6,7,8-tetrahydrofolate. The region spanning G216–G373 is the TrmE-type G domain. A K(+)-binding site is contributed by N226. GTP-binding positions include N226–S231, T245–T251, and D270–G273. S230 lines the Mg(2+) pocket. K(+) contacts are provided by T245, I247, and T250. Position 251 (T251) interacts with Mg(2+). (6S)-5-formyl-5,6,7,8-tetrahydrofolate is bound at residue K448.

Belongs to the TRAFAC class TrmE-Era-EngA-EngB-Septin-like GTPase superfamily. TrmE GTPase family. In terms of assembly, homodimer. Heterotetramer of two MnmE and two MnmG subunits. The cofactor is K(+).

Its subcellular location is the cytoplasm. In terms of biological role, exhibits a very high intrinsic GTPase hydrolysis rate. Involved in the addition of a carboxymethylaminomethyl (cmnm) group at the wobble position (U34) of certain tRNAs, forming tRNA-cmnm(5)s(2)U34. This Neisseria meningitidis serogroup B (strain ATCC BAA-335 / MC58) protein is tRNA modification GTPase MnmE.